The primary structure comprises 552 residues: Hyaluronan synthase 2 (552 aa).

Over 1-11 the chain is Cytoplasmic; sequence MHCERFLCILR. The helical transmembrane segment at 12-32 threads the bilayer; it reads IIGTTLFGVSLLLGITAAYIV. Residues 33–45 are Extracellular-facing; that stretch reads GYQFIQTDNYYFS. The chain crosses the membrane as a helical span at residues 46-66; sequence FGLYGAFLASHLIIQSLFAFL. Over 67 to 374 the chain is Cytoplasmic; the sequence is EHRKMKKSLE…NAMWFHKHHL (308 aa). Position 110 is a phosphothreonine (T110). A Glycyl lysine isopeptide (Lys-Gly) (interchain with G-Cter in ubiquitin) cross-link involves residue K190. An O-linked (GlcNAc) serine glycan is attached at S221. T328 carries the phosphothreonine modification. A helical transmembrane segment spans residues 375-395; that stretch reads WMTYEAIITGFFPFFLIATVI. Residues 396-402 are Extracellular-facing; that stretch reads QLFYRGK. The chain crosses the membrane as a helical span at residues 403-423; that stretch reads IWNILLFLLTVQLVGLIKSSF. Residues 424–429 lie on the Cytoplasmic side of the membrane; sequence ASCLRG. Residues 430 to 450 traverse the membrane as a helical segment; sequence NIVMVFMSLYSVLYMSSLLPA. The Extracellular portion of the chain corresponds to 451–475; sequence KMFAIATINKAGWGTSGRKTIVVNF. The helical transmembrane segment at 476-496 threads the bilayer; it reads IGLIPVSVWFTILLGGVIFTI. The Cytoplasmic segment spans residues 497-510; that stretch reads YKESKRPFSESKQT. Residues 511 to 531 form a helical membrane-spanning segment; sequence VLIVGTLLYACYWVMLLTLYV. Over 532-552 the chain is Extracellular; the sequence is VLINKCGRRKKGQQYDMVLDV.

Belongs to the NodC/HAS family. Homodimer; dimerization promotes enzymatic activity. Forms heterodimer with HAS3. Forms heterodimer with HAS1. Requires Mg(2+) as cofactor. In terms of processing, phosphorylation at Thr-328 is essential for hyaluronan synthase activity. Phosphorylation at Thr-110 is required for transport from ER to Golgi. Post-translationally, O-GlcNAcylation at Ser-221 increases the stability of HAS2 and plasma membrane localization. Ubiquitination at Lys-190; this ubiquitination is essential for hyaluronan synthase activity and homo- or hetero-oligomerization. Can also be poly-ubiquitinated. Deubiquitinated by USP17 and USP4. USP17 efficiently removes 'Lys-63'- and 'Lys-48'-linked polyubiquitin chains, whereas USP4 preferentially removes monoubiquitination and, partially, both 'Lys-63'- and 'Lys-48'-linked polyubiquitin chain. In terms of tissue distribution, expressed in fibroblasts.

The protein localises to the cell membrane. It localises to the endoplasmic reticulum membrane. Its subcellular location is the vesicle. It is found in the golgi apparatus membrane. The protein resides in the lysosome. It catalyses the reaction [hyaluronan](n) + UDP-N-acetyl-alpha-D-glucosamine = N-acetyl-beta-D-glucosaminyl-(1-&gt;4)-[hyaluronan](n) + UDP + H(+). It carries out the reaction N-acetyl-beta-D-glucosaminyl-(1-&gt;4)-[hyaluronan](n) + UDP-alpha-D-glucuronate = [hyaluronan](n+1) + UDP + H(+). Its pathway is glycan biosynthesis; hyaluronan biosynthesis. With respect to regulation, regulated by several post-translational modifications such as ubiquitination/deubiquitination, phosphorylation and O-GlcNAcylation. The enzymatic activity depends on the availability of UDP-GlcUA and UDP-GlcNAc. Catalyzes the addition of GlcNAc or GlcUA monosaccharides to the nascent hyaluronan polymer. Therefore, it is essential to hyaluronan synthesis a major component of most extracellular matrices that has a structural role in tissues architectures and regulates cell adhesion, migration and differentiation. This is one of three isoenzymes responsible for cellular hyaluronan synthesis and it is particularly responsible for the synthesis of high molecular mass hyaluronan. This chain is Hyaluronan synthase 2, found in Homo sapiens (Human).